We begin with the raw amino-acid sequence, 990 residues long: Kinesin-related protein 5 (990 aa).

The Kinesin motor domain maps to 6–330 (NIRVMCRFRP…LKFGARAKSI (325 aa)). Residue 83 to 90 (GQTGSGKT) coordinates ATP. Disordered regions lie at residues 401 to 485 (QSNS…SSID) and 732 to 788 (FSSS…QDQQ). Over residues 406 to 418 (SGGGGSGSSGGSS) the composition is skewed to gly residues. Low complexity-rich tracts occupy residues 466–485 (TSSI…SSID) and 733–781 (SSSN…PSSN). A coiled-coil region spans residues 513 to 948 (IEMEKMKEDT…DQLISTQRLI (436 aa)).

It belongs to the TRAFAC class myosin-kinesin ATPase superfamily. Kinesin family. Kinesin subfamily. Interacts with actin.

It localises to the cytoplasm. It is found in the cytoskeleton. In terms of biological role, microtubule-associated force-producing protein that plays a role in organelle transport. Its motor activity is directed toward the microtubule's plus end. May connect microtubules to actin filaments. Associates with actin-based structures in cells and is likely involved in the organization of actin cytoskeletons in such structures. The chain is Kinesin-related protein 5 (kif5) from Dictyostelium discoideum (Social amoeba).